The primary structure comprises 398 residues: Lysophospholipid acyltransferase LPEAT1 (398 aa).

Residues 1 to 24 (MESELKDLNSNSNPPSSKEDRPLL) form a disordered region. Residue S28 is modified to Phosphoserine. A helical transmembrane segment spans residues 66–86 (LAVALVTLVPLRFLLSMSILL). The disordered stretch occupies residues 158 to 185 (RDSDMDSNPKTTSTEINQKGEAATEEPE). A compositionally biased stretch (polar residues) spans 163–174 (DSNPKTTSTEIN). The HXXXXD motif motif lies at 194 to 199 (HVSYLD).

Belongs to the 1-acyl-sn-glycerol-3-phosphate acyltransferase family.

Its subcellular location is the endoplasmic reticulum membrane. It catalyses the reaction a 1-acyl-sn-glycero-3-phosphoethanolamine + an acyl-CoA = a 1,2-diacyl-sn-glycero-3-phosphoethanolamine + CoA. It carries out the reaction a 1-acyl-sn-glycero-3-phosphate + an acyl-CoA = a 1,2-diacyl-sn-glycero-3-phosphate + CoA. The catalysed reaction is a 1-acyl-sn-glycero-3-phosphocholine + an acyl-CoA = a 1,2-diacyl-sn-glycero-3-phosphocholine + CoA. The enzyme catalyses a 1-acyl-sn-glycero-3-phospho-L-serine + an acyl-CoA = a 1,2-diacyl-sn-glycero-3-phospho-L-serine + CoA. The protein operates within lipid metabolism; phospholipid metabolism. Functionally, possesses acyl-CoA-dependent lysophospholipid acyltransferase activity with a subset of lysophospholipids as substrates. Exhibits strong acylation activity on lysophosphatidylethanolamine (LPE) and lysophosphatidate (LPA), and lower activity on lysophosphatidylcholine (LPC) and lysophosphatidylserine (LPS). Exhibits acylation activity on both LPE and LPC. Has a preference for 18:1-LPE over 16:0-LPE as acceptor. Palmitoyl-CoA (16:0-CoA) is a better acyl donor than oleoyl-CoA (18:1-CoA). Among several different acyl-CoA species the best acyl donor is palmitoyl-CoA (16:0-CoA). Activity is calcium-independent. Its activity is essential for maintaining adequate levels of phosphatidylethanolamine (PE), LPE and LPC in the cells, which is crucial for plant growth regulation. In Arabidopsis thaliana (Mouse-ear cress), this protein is Lysophospholipid acyltransferase LPEAT1.